A 547-amino-acid chain; its full sequence is Glucose-6-phosphate isomerase (547 aa).

Glutamate 354 serves as the catalytic Proton donor. Catalysis depends on residues histidine 385 and lysine 513.

It belongs to the GPI family.

It localises to the cytoplasm. It carries out the reaction alpha-D-glucose 6-phosphate = beta-D-fructose 6-phosphate. It functions in the pathway carbohydrate biosynthesis; gluconeogenesis. It participates in carbohydrate degradation; glycolysis; D-glyceraldehyde 3-phosphate and glycerone phosphate from D-glucose: step 2/4. Catalyzes the reversible isomerization of glucose-6-phosphate to fructose-6-phosphate. The polypeptide is Glucose-6-phosphate isomerase (Endomicrobium trichonymphae).